The primary structure comprises 382 residues: Gap junction alpha-1 protein (382 aa).

Over 2 to 23 (GDWSALGKLLDKVQAYSTAGGK) the chain is Cytoplasmic. Ser5 is subject to Phosphoserine. A helical transmembrane segment spans residues 24–44 (VWLSVLFIFRILLLGTAVESA). The Extracellular segment spans residues 45 to 76 (WGDEQSAFRCNTQQPGCENVCYDKSFPISHVR). 2 cysteine pairs are disulfide-bonded: Cys54-Cys192 and Cys187-Cys198. Residues 77 to 97 (FWVLQIIFVSVPTLLYLAHVF) traverse the membrane as a helical segment. Residues 98–155 (YVMRKEEKLNKKEEELKVAQTDGVNVEMHLKQIEIKKFKYGIEEHGKVKMRGGLLRTY) lie on the Cytoplasmic side of the membrane. Residue Lys144 forms a Glycyl lysine isopeptide (Lys-Gly) (interchain with G-Cter in SUMO) linkage. The helical transmembrane segment at 156–176 (IISILFKSVFEVAFLLIQWYI) threads the bilayer. Topologically, residues 177–207 (YGFSLSAVYTCKRDPCPHQVDCFLSRPTEKT) are extracellular. Residues 208 to 228 (IFIIFMLVVSLVSLALNIIEL) form a helical membrane-spanning segment. Topologically, residues 229 to 382 (FYVFFKGVKD…SRPRPDDLEI (154 aa)) are cytoplasmic. A Glycyl lysine isopeptide (Lys-Gly) (interchain with G-Cter in SUMO) cross-link involves residue Lys237. The segment at 244-382 (SDPYHATTGP…SRPRPDDLEI (139 aa)) is interaction with NOV. Phosphotyrosine is present on Tyr247. Phosphoserine is present on residues Ser255, Ser257, and Ser262. An interaction with UBQLN4 region spans residues 264-382 (KYAYFNGCSS…SRPRPDDLEI (119 aa)). S-nitrosocysteine is present on Cys271. Thr275 is subject to Phosphothreonine. Phosphoserine occurs at positions 306, 314, and 325. Residues 317 to 332 (QNRMGQAGSTISNSHA) show a composition bias toward polar residues. The disordered stretch occupies residues 317 to 382 (QNRMGQAGST…SRPRPDDLEI (66 aa)). The residue at position 326 (Thr326) is a Phosphothreonine. Phosphoserine occurs at positions 328, 330, 341, and 365. Residues 362 to 374 (RPSSRASSRASSR) are compositionally biased toward low complexity. Ser368 bears the Phosphoserine; by PKC/PRKCG and PKC/PRKCD mark. Phosphoserine occurs at positions 369 and 373.

It belongs to the connexin family. Alpha-type (group II) subfamily. As to quaternary structure, a connexon is composed of a hexamer of connexins. Interacts with CSNK1D. Interacts with RIC1/CIP150. Interacts (via C-terminus) with TJP1. Interacts (via C-terminus) with SRC (via SH3 domain). Interacts (not ubiquitinated) with UBQLN4 (via UBA domain). Interacts with CNST. Interacts with SGSM3. Interacts with NOV. Interacts with TMEM65. Interacts with ANK3/ANKG and PKP2. In terms of processing, phosphorylation at Ser-325, Ser-328 and Ser-330 by CK1 modulates gap junction assembly. Phosphorylated at Ser-368 by PRKCG; phosphorylation induces disassembly of gap junction plaques and inhibition of gap junction activity. Phosphorylation at Ser-368 by PRKCD triggers its internalization into small vesicles leading to proteasome-mediated degradation. Sumoylated with SUMO1, SUMO2 and SUMO3, which may regulate the level of functional Cx43 gap junctions at the plasma membrane. May be desumoylated by SENP1 or SENP2. Post-translationally, acetylated in the developing cortex; leading to delocalization from the cell membrane. In terms of processing, S-nitrosylation at Cys-271 is enriched at the muscle endothelial gap junction in arteries, it augments channel permeability and may regulate of smooth muscle cell to endothelial cell communication. Expressed in heart, non-sensory epithelial cells, and in fibrocytes of the spiral ligament and the spiral limbus. Expressed in bladder smooth muscle cells (at protein level). Expressed in astrocytes (at protein level).

It is found in the cell membrane. The protein resides in the cell junction. Its subcellular location is the gap junction. The protein localises to the endoplasmic reticulum. Its function is as follows. Gap junction protein that acts as a regulator of bladder capacity. A gap junction consists of a cluster of closely packed pairs of transmembrane channels, the connexons, through which materials of low MW diffuse from one cell to a neighboring cell. Negative regulator of bladder functional capacity: acts by enhancing intercellular electrical and chemical transmission, thus sensitizing bladder muscles to cholinergic neural stimuli and causing them to contract. May play a role in cell growth inhibition through the regulation of NOV expression and localization. Plays an essential role in gap junction communication in the ventricles. Connexin 43 is possibly the ATP-induced pore of mouse macrophages. In Mus musculus (Mouse), this protein is Gap junction alpha-1 protein (Gja1).